Reading from the N-terminus, the 227-residue chain is Deoxyribose-phosphate aldolase (227 aa).

The active-site Proton donor/acceptor is Asp-98. Lys-161 (schiff-base intermediate with acetaldehyde) is an active-site residue. The active-site Proton donor/acceptor is the Lys-191.

The protein belongs to the DeoC/FbaB aldolase family. DeoC type 1 subfamily.

It localises to the cytoplasm. The enzyme catalyses 2-deoxy-D-ribose 5-phosphate = D-glyceraldehyde 3-phosphate + acetaldehyde. It functions in the pathway carbohydrate degradation; 2-deoxy-D-ribose 1-phosphate degradation; D-glyceraldehyde 3-phosphate and acetaldehyde from 2-deoxy-alpha-D-ribose 1-phosphate: step 2/2. Functionally, catalyzes a reversible aldol reaction between acetaldehyde and D-glyceraldehyde 3-phosphate to generate 2-deoxy-D-ribose 5-phosphate. This Frankia alni (strain DSM 45986 / CECT 9034 / ACN14a) protein is Deoxyribose-phosphate aldolase.